A 129-amino-acid polypeptide reads, in one-letter code: MGGEGPGSDDIVKKMAQLMMQGAVMLDKTCPADGLPLFKLKTGDVVCPVHGKVVIVASDEEARDVEVEEIIREVRYRAARNVMKGLEEDNVDTVSKWLGVLETAERILAIRRGSRQGQGSVRGEGRESK.

It belongs to the UPF0148 family.

This Aeropyrum pernix (strain ATCC 700893 / DSM 11879 / JCM 9820 / NBRC 100138 / K1) protein is UPF0148 protein APE_0207.